We begin with the raw amino-acid sequence, 328 residues long: Ribosomal RNA small subunit methyltransferase H (328 aa).

S-adenosyl-L-methionine is bound by residues 37-39, D57, F83, D104, and Q111; that span reads GGH.

This sequence belongs to the methyltransferase superfamily. RsmH family.

It localises to the cytoplasm. The enzyme catalyses cytidine(1402) in 16S rRNA + S-adenosyl-L-methionine = N(4)-methylcytidine(1402) in 16S rRNA + S-adenosyl-L-homocysteine + H(+). Functionally, specifically methylates the N4 position of cytidine in position 1402 (C1402) of 16S rRNA. The polypeptide is Ribosomal RNA small subunit methyltransferase H (Neisseria meningitidis serogroup C / serotype 2a (strain ATCC 700532 / DSM 15464 / FAM18)).